Consider the following 1279-residue polypeptide: ATP-dependent helicase/nuclease subunit A (1279 aa).

In terms of domain architecture, UvrD-like helicase ATP-binding spans 4–499; that stretch reads TKWTDEQRQA…VKLFKNFRSR (496 aa). Residue 25 to 32 coordinates ATP; that stretch reads AGAGAGKT. The UvrD-like helicase C-terminal domain occupies 526–853; sequence EEALKVGASY…RIMSIHKSKG (328 aa).

This sequence belongs to the helicase family. AddA subfamily. As to quaternary structure, heterodimer of AddA and AddB/RexB. Mg(2+) serves as cofactor.

It carries out the reaction Couples ATP hydrolysis with the unwinding of duplex DNA by translocating in the 3'-5' direction.. The enzyme catalyses ATP + H2O = ADP + phosphate + H(+). In terms of biological role, the heterodimer acts as both an ATP-dependent DNA helicase and an ATP-dependent, dual-direction single-stranded exonuclease. Recognizes the chi site generating a DNA molecule suitable for the initiation of homologous recombination. The AddA nuclease domain is required for chi fragment generation; this subunit has the helicase and 3' -&gt; 5' nuclease activities. The chain is ATP-dependent helicase/nuclease subunit A from Clostridium botulinum (strain Okra / Type B1).